The primary structure comprises 176 residues: Isopentenyl-diphosphate Delta-isomerase (176 aa).

2 residues coordinate Mn(2+): His23 and His29. Positions 27 to 161 (LRHLAISVFV…PERFTPWLKI (135 aa)) constitute a Nudix hydrolase domain. Cys63 is an active-site residue. Residue Cys63 participates in Mg(2+) binding. Mn(2+) is bound at residue His65. A Mg(2+)-binding site is contributed by Glu83. Positions 109 and 111 each coordinate Mn(2+). Glu111 is an active-site residue.

The protein belongs to the IPP isomerase type 1 family. Mg(2+) is required as a cofactor. Mn(2+) serves as cofactor.

Its subcellular location is the cytoplasm. It catalyses the reaction isopentenyl diphosphate = dimethylallyl diphosphate. Its pathway is isoprenoid biosynthesis; dimethylallyl diphosphate biosynthesis; dimethylallyl diphosphate from isopentenyl diphosphate: step 1/1. It functions in the pathway porphyrin-containing compound metabolism; chlorophyll biosynthesis. In terms of biological role, catalyzes the 1,3-allylic rearrangement of the homoallylic substrate isopentenyl (IPP) to its highly electrophilic allylic isomer, dimethylallyl diphosphate (DMAPP). The chain is Isopentenyl-diphosphate Delta-isomerase from Rhodobacter capsulatus (strain ATCC BAA-309 / NBRC 16581 / SB1003).